The following is a 793-amino-acid chain: Signal transducer and activator of transcription 5A (793 aa).

A Phosphotyrosine modification is found at tyrosine 90. Phosphoserine is present on serine 128. Residues 589–686 (WNDGAILGFV…EVFAKYYTPV (98 aa)) form the SH2 domain. 2 positions are modified to phosphotyrosine: tyrosine 682 and tyrosine 694. Position 779 is a phosphoserine (serine 779).

This sequence belongs to the transcription factor STAT family. As to quaternary structure, forms a homodimer or a heterodimer with a related family member. Interacts with NCOA1 and SOCS7. Binds NR3C1. Interacts with ERBB4. Interacts with EBF4. Interacts with CD69. ISGylated. Post-translationally, tyrosine phosphorylated in response to KITLG/SCF, IL2, IL3, IL7, IL15, CSF2/GMCSF, GH1, PRL, EPO and THPO. Activated KIT promotes phosphorylation on tyrosine residues and subsequent translocation to the nucleus. Tyrosine phosphorylated in response to constitutively activated FGFR1, FGFR2, FGFR3 and FGFR4. Tyrosine phosphorylation is required for DNA-binding activity and dimerization. Serine phosphorylation is also required for maximal transcriptional activity. Tyrosine phosphorylated in response to signaling via activated FLT3; wild-type FLT3 results in much weaker phosphorylation than constitutively activated mutant FLT3. Alternatively, can be phosphorylated by JAK2 at Tyr-694. As to expression, in the virgin, found in most tissues except brain and muscle. During lactation, abundantly found in mammary tissue, as well as in other secretory organs such as salivary gland and seminal vesicle.

Its subcellular location is the cytoplasm. The protein resides in the nucleus. Its function is as follows. Carries out a dual function: signal transduction and activation of transcription. Mediates cellular responses to the cytokine KITLG/SCF and other growth factors. May mediate cellular responses to activated FGFR1, FGFR2, FGFR3 and FGFR4. Binds to the GAS element and activates PRL-induced transcription. Regulates the expression of milk proteins during lactation. This Mus musculus (Mouse) protein is Signal transducer and activator of transcription 5A (Stat5a).